A 341-amino-acid polypeptide reads, in one-letter code: Phenylalanine--tRNA ligase alpha subunit (341 aa).

Glu-252 provides a ligand contact to Mg(2+).

It belongs to the class-II aminoacyl-tRNA synthetase family. Phe-tRNA synthetase alpha subunit type 1 subfamily. As to quaternary structure, tetramer of two alpha and two beta subunits. Mg(2+) serves as cofactor.

It is found in the cytoplasm. It catalyses the reaction tRNA(Phe) + L-phenylalanine + ATP = L-phenylalanyl-tRNA(Phe) + AMP + diphosphate + H(+). This chain is Phenylalanine--tRNA ligase alpha subunit, found in Malacoplasma penetrans (strain HF-2) (Mycoplasma penetrans).